We begin with the raw amino-acid sequence, 156 residues long: Small ribosomal subunit protein uS7 (156 aa).

Belongs to the universal ribosomal protein uS7 family. In terms of assembly, part of the 30S ribosomal subunit. Contacts proteins S9 and S11.

One of the primary rRNA binding proteins, it binds directly to 16S rRNA where it nucleates assembly of the head domain of the 30S subunit. Is located at the subunit interface close to the decoding center, probably blocks exit of the E-site tRNA. This Bacillus cereus (strain B4264) protein is Small ribosomal subunit protein uS7.